A 338-amino-acid chain; its full sequence is Ketol-acid reductoisomerase (NADP(+)) (338 aa).

The KARI N-terminal Rossmann domain maps to 1–181 (MKVFYDKDAD…GGGRAGIIET (181 aa)). NADP(+) contacts are provided by residues 24 to 27 (YGSQ), R47, and S52. The active site involves H107. Position 133 (G133) interacts with NADP(+). Residues 182 to 327 (NFREETETDL…AKLRAMMPWI (146 aa)) enclose the KARI C-terminal knotted domain. Residues D190, E194, E226, and E230 each coordinate Mg(2+). S251 contributes to the substrate binding site.

It belongs to the ketol-acid reductoisomerase family. Mg(2+) is required as a cofactor.

The enzyme catalyses (2R)-2,3-dihydroxy-3-methylbutanoate + NADP(+) = (2S)-2-acetolactate + NADPH + H(+). It catalyses the reaction (2R,3R)-2,3-dihydroxy-3-methylpentanoate + NADP(+) = (S)-2-ethyl-2-hydroxy-3-oxobutanoate + NADPH + H(+). Its pathway is amino-acid biosynthesis; L-isoleucine biosynthesis; L-isoleucine from 2-oxobutanoate: step 2/4. It functions in the pathway amino-acid biosynthesis; L-valine biosynthesis; L-valine from pyruvate: step 2/4. In terms of biological role, involved in the biosynthesis of branched-chain amino acids (BCAA). Catalyzes an alkyl-migration followed by a ketol-acid reduction of (S)-2-acetolactate (S2AL) to yield (R)-2,3-dihydroxy-isovalerate. In the isomerase reaction, S2AL is rearranged via a Mg-dependent methyl migration to produce 3-hydroxy-3-methyl-2-ketobutyrate (HMKB). In the reductase reaction, this 2-ketoacid undergoes a metal-dependent reduction by NADPH to yield (R)-2,3-dihydroxy-isovalerate. The chain is Ketol-acid reductoisomerase (NADP(+)) from Ralstonia nicotianae (strain ATCC BAA-1114 / GMI1000) (Ralstonia solanacearum).